An 871-amino-acid polypeptide reads, in one-letter code: MEIRKKPNIPMCLVLDSSSRPFMTLLFTILLFLTGLASAVGAVGGSPTAGFKPADDILIDCGSKSSTKTPEGRVFKSDSETVQYIEAKDDIQVSAPPSDKLPSPIYLTAKIFREEAIYKFHLTRPGWHWVRLHFFAFPNDKFDLQQATFSVLTEKYVLLHNFKLSNDNNDSQATVQKEYLLNMTDAQFALRFKPMKGSAAFINGIELVSAPDELISDAGTSLFPVNGFSGLSDYAYQSVYRVNVGGPLITPQNDTLGRTWTPDKEYLKDENLAKDVKTNPTAIIYPPGVTPLIAPQTVYATGAEMADSQTIDPNFNVTWNFPSNPSFHYFIRLHFCDIISKSLNDLYFNVYINGKTAISGLDLSTVAGDLSAPYYKDIVVNSTLMTSELQVQIGPMGEDTGKKNAILNGVEVLKMSNSVNSLDGEFGVDGQRASMGKQGMVATAGFVMMFGAFVGLGAMVYKWKKRPQDWQKRNSFSSWLLPIHAGDSTFMTSKTGSHKSNLYNSALGLGRYFSLSELQEVTKNFDASEIIGVGGFGNVYIGTIDDGTQVAIKRGNPQSEQGITEFHTEIQMLSKLRHRHLVSLIGYCDENAEMILVYEYMSNGPFRDHLYGKNLSPLTWKQRLEICIGAARGLHYLHTGTAQGIIHRDVKSTNILLDEALVAKVADFGLSKDVAFGQNHVSTAVKGSFGYLDPEYFRRQQLTDKSDVYSFGVVLLEALCARPAINPQLPREQVNLAEWAMLWKQKGLLEKIIDPHLVGAVNPESMKKFAEAAEKCLADYGVDRPTMGDVLWNLEYALQLQEAFSQGKAEAEEVETPKPVAVPAAAPTSPAATTAAASERPVSQTEEKDDSTVDQHSGTTMFTQFASLNGR.

The first 39 residues, 1 to 39 (MEIRKKPNIPMCLVLDSSSRPFMTLLFTILLFLTGLASA), serve as a signal peptide directing secretion. Over 40–439 (VGAVGGSPTA…GQRASMGKQG (400 aa)) the chain is Extracellular. 5 N-linked (GlcNAc...) asparagine glycosylation sites follow: asparagine 169, asparagine 182, asparagine 253, asparagine 316, and asparagine 381. The helical transmembrane segment at 440–460 (MVATAGFVMMFGAFVGLGAMV) threads the bilayer. The Cytoplasmic portion of the chain corresponds to 461–871 (YKWKKRPQDW…FTQFASLNGR (411 aa)). Residues 525-797 (FDASEIIGVG…GDVLWNLEYA (273 aa)) form the Protein kinase domain. ATP contacts are provided by residues 531 to 539 (IGVGGFGNV) and lysine 553. Aspartate 649 acts as the Proton acceptor in catalysis. Residues 808–871 (KAEAEEVETP…FTQFASLNGR (64 aa)) form a disordered region. The segment covering 817–839 (PKPVAVPAAAPTSPAATTAAASE) has biased composition (low complexity). A compositionally biased stretch (polar residues) spans 854-871 (DQHSGTTMFTQFASLNGR).

This sequence belongs to the protein kinase superfamily. Ser/Thr protein kinase family.

Its subcellular location is the membrane. The polypeptide is Probable receptor-like protein kinase At2g21480 (Arabidopsis thaliana (Mouse-ear cress)).